The sequence spans 498 residues: ATP synthase subunit beta, chloroplastic (498 aa).

172–179 (GGAGVGKT) contacts ATP.

It belongs to the ATPase alpha/beta chains family. F-type ATPases have 2 components, CF(1) - the catalytic core - and CF(0) - the membrane proton channel. CF(1) has five subunits: alpha(3), beta(3), gamma(1), delta(1), epsilon(1). CF(0) has four main subunits: a(1), b(1), b'(1) and c(9-12).

It is found in the plastid. The protein resides in the chloroplast thylakoid membrane. It catalyses the reaction ATP + H2O + 4 H(+)(in) = ADP + phosphate + 5 H(+)(out). Its function is as follows. Produces ATP from ADP in the presence of a proton gradient across the membrane. The catalytic sites are hosted primarily by the beta subunits. This chain is ATP synthase subunit beta, chloroplastic, found in Salacca zalacca (Snake palm).